Consider the following 637-residue polypeptide: Early transcription factor 70 kDa subunit (637 aa).

Residues 32–185 form the Helicase ATP-binding domain; sequence RTIIDENRSV…GHIIDLMSEE (154 aa). An ATP-binding site is contributed by 45–52; the sequence is HIMGSGKT. The DEXH box signature appears at 135–138; the sequence is DEAH. A Helicase C-terminal domain is found at 327–507; sequence KFKYFINRIQ…VLPFDIKKLL (181 aa).

It belongs to the helicase family. VETF subfamily. As to quaternary structure, heterodimer of a 70 kDa and a 82 kDa subunit. Part of the early transcription complex composed of ETF, RAP94/OPG109, and the DNA-directed RNA polymerase.

Its subcellular location is the virion. Its function is as follows. Acts with RNA polymerase to initiate transcription from early gene promoters. Is recruited by the RPO-associated protein of 94 kDa RAP94/OPG109 to form the early transcription complex, which also contains the core RNA polymerase. ETF heterodimer binds to early gene promoters. This Homo sapiens (Human) protein is Early transcription factor 70 kDa subunit (OPG118).